A 271-amino-acid chain; its full sequence is Serine protease SP24D (271 aa).

The first 22 residues, 1–22 (MTLADRVPLALAALAYLALVSG), serve as a signal peptide directing secretion. Residues 23-49 (VRFHLSEQNDVLPGGSQARRPFFQGAR) constitute a propeptide, activation peptide. Residues 50–269 (IVGGSVASEG…FVTWIQTTMR (220 aa)) form the Peptidase S1 domain. Cysteines 75 and 91 form a disulfide. Active-site charge relay system residues include histidine 90 and aspartate 136. 2 disulfides stabilise this stretch: cysteine 199/cysteine 211 and cysteine 221/cysteine 246. The Charge relay system role is filled by serine 225.

This sequence belongs to the peptidase S1 family. In terms of tissue distribution, highest level of adult expression is in the thorax.

This Anopheles gambiae (African malaria mosquito) protein is Serine protease SP24D (Sp24D).